Here is a 224-residue protein sequence, read N- to C-terminus: Probable septum site-determining protein MinC (224 aa).

Belongs to the MinC family. Interacts with MinD and FtsZ.

Its function is as follows. Cell division inhibitor that blocks the formation of polar Z ring septums. Rapidly oscillates between the poles of the cell to destabilize FtsZ filaments that have formed before they mature into polar Z rings. Prevents FtsZ polymerization. The chain is Probable septum site-determining protein MinC from Shewanella amazonensis (strain ATCC BAA-1098 / SB2B).